A 539-amino-acid chain; its full sequence is MPIEIVCKIKFAEEDAKPKEKEAGDEQSLLGAAQGPAAPRDLATFASTSTLHGLGRACGPGPHGLRRTLWALALLTSLAAFLYQAASLARGYLTRPHLVAMDPAAPAPVAGFPAVTLCNINRFRHSALSDADIFHLANLTGLPPKDRDGHRAAGLRYPEPDMVDILNRTGHQLADMLKSCNFSGHHCSASNFSVVYTRYGKCYTFNADPQSSLPSRAGGMGSGLEIMLDIQQEEYLPIWRETNETSFEAGIRVQIHSQEEPPYIHQLGFGVSPGFQTFVSCQEQRLTYLPQPWGNCRAESELREPELQGYSAYSVSACRLRCEKEAVLQRCHCRMVHMPGNETICPPNIYIECADHTLDSLGGGSEGPCFCPTPCNLTRYGKEISMVKIPNRGSARYLARKYNRNETYIRENFLVLDVFFEALTSEAMEQQAAYGLSALLGDLGGQMGLFIGASILTLLEILDYIYEVSWDRLKRVWRRPKTPLRTSTGGISTLGLQELKEQSPCPSRGRAEGGGASSLLPNHHHPHGPPGSLFEDFAC.

The Cytoplasmic portion of the chain corresponds to 1-68 (MPIEIVCKIK…GPGPHGLRRT (68 aa)). Residues 69–89 (LWALALLTSLAAFLYQAASLA) form a helical membrane-spanning segment. Over 90-438 (RGYLTRPHLV…EQQAAYGLSA (349 aa)) the chain is Extracellular. 2 cysteine pairs are disulfide-bonded: cysteine 118–cysteine 202 and cysteine 180–cysteine 187. N-linked (GlcNAc...) asparagine glycans are attached at residues asparagine 191, asparagine 243, asparagine 341, and asparagine 376. 5 cysteine pairs are disulfide-bonded: cysteine 296-cysteine 375, cysteine 318-cysteine 371, cysteine 322-cysteine 369, cysteine 331-cysteine 353, and cysteine 333-cysteine 345. The chain crosses the membrane as a helical span at residues 439–459 (LLGDLGGQMGLFIGASILTLL). The GAS motif; ion selectivity filter motif lies at 452 to 454 (GAS). At 460 to 539 (EILDYIYEVS…PGSLFEDFAC (80 aa)) the chain is on the cytoplasmic side. The tract at residues 500 to 531 (KEQSPCPSRGRAEGGGASSLLPNHHHPHGPPG) is disordered.

The protein belongs to the amiloride-sensitive sodium channel (TC 1.A.6) family. ASIC4 subfamily. In terms of assembly, homotrimer. Heterotrimer; with other ASIC proteins producing functional channels.

The protein localises to the cell membrane. Its function is as follows. Does not exhibit measurable stand-alone pH-gated sodium channel activity but may form pH-gated heterotrimeric sodium channels. Its activity could also depend on alternative gating mechanisms. The polypeptide is Acid-sensing ion channel 4 (Mus musculus (Mouse)).